Consider the following 452-residue polypeptide: Maltoporin (452 aa).

A signal peptide spans 1 to 25; sequence MMITLRKLPLAVAVAAGVMSAQAMA.

The protein belongs to the porin LamB (TC 1.B.3) family. In terms of assembly, homotrimer formed of three 18-stranded antiparallel beta-barrels, containing three independent channels.

It localises to the cell outer membrane. The catalysed reaction is beta-maltose(in) = beta-maltose(out). Its function is as follows. Involved in the transport of maltose and maltodextrins. The polypeptide is Maltoporin (Salmonella heidelberg (strain SL476)).